We begin with the raw amino-acid sequence, 453 residues long: MNIVILAAGTGKRMRSALPKVLHPLAGRPLLAHVIDTARTLKPTHLVVVIGHGAEAVRKAVAAPDVQFAVQEQQLGTGHAVQQALPLLDPSAPTLVLYGDVPLTRAGTLQALTDRAGQGGYGVLTVTLADPSGYGRIVRDAHGKVARIVEQKDATPEQLAIAEINTGIIVAPTERLGDWLAALKNDNAQGEFYLTDAVEMAIEAGLEVVTTQPDHEWETLGVNSKQQLAELERIHQRNVADALLVAGVTLADPARLDVRGTLECGRDVSIDVNCVFEGRVTLADNVTVGPNCVIRNANIGAGTRVDAFTHIEGAEVGANVVLGPYARLRPGASLHDESHVGNFVEVKNAVLGHGSKANHLTYIGDADIGARVNIGAGTITCNYDGANKFRTIIEDDVFVGSDTQLVAPVRVKRGATIAAGTTVWKDVEADALVLNDKTQTSRTGYVRPTKKKS.

Residues 1 to 225 are pyrophosphorylase; sequence MNIVILAAGT…EWETLGVNSK (225 aa). UDP-N-acetyl-alpha-D-glucosamine contacts are provided by residues 6 to 9, lysine 20, glutamine 71, 76 to 77, 98 to 100, glycine 135, glutamate 150, asparagine 165, and asparagine 223; these read LAAG, GT, and YGD. Aspartate 100 is a binding site for Mg(2+). Asparagine 223 contributes to the Mg(2+) binding site. Residues 226–246 form a linker region; sequence QQLAELERIHQRNVADALLVA. The N-acetyltransferase stretch occupies residues 247–453; sequence GVTLADPARL…GYVRPTKKKS (207 aa). UDP-N-acetyl-alpha-D-glucosamine is bound by residues arginine 329 and lysine 347. The active-site Proton acceptor is histidine 359. Residues tyrosine 362 and asparagine 373 each contribute to the UDP-N-acetyl-alpha-D-glucosamine site. Acetyl-CoA-binding positions include alanine 376, 382–383, serine 401, and alanine 419; that span reads NY.

This sequence in the N-terminal section; belongs to the N-acetylglucosamine-1-phosphate uridyltransferase family. In the C-terminal section; belongs to the transferase hexapeptide repeat family. As to quaternary structure, homotrimer. The cofactor is Mg(2+).

It localises to the cytoplasm. It catalyses the reaction alpha-D-glucosamine 1-phosphate + acetyl-CoA = N-acetyl-alpha-D-glucosamine 1-phosphate + CoA + H(+). It carries out the reaction N-acetyl-alpha-D-glucosamine 1-phosphate + UTP + H(+) = UDP-N-acetyl-alpha-D-glucosamine + diphosphate. It participates in nucleotide-sugar biosynthesis; UDP-N-acetyl-alpha-D-glucosamine biosynthesis; N-acetyl-alpha-D-glucosamine 1-phosphate from alpha-D-glucosamine 6-phosphate (route II): step 2/2. The protein operates within nucleotide-sugar biosynthesis; UDP-N-acetyl-alpha-D-glucosamine biosynthesis; UDP-N-acetyl-alpha-D-glucosamine from N-acetyl-alpha-D-glucosamine 1-phosphate: step 1/1. Its pathway is bacterial outer membrane biogenesis; LPS lipid A biosynthesis. Its function is as follows. Catalyzes the last two sequential reactions in the de novo biosynthetic pathway for UDP-N-acetylglucosamine (UDP-GlcNAc). The C-terminal domain catalyzes the transfer of acetyl group from acetyl coenzyme A to glucosamine-1-phosphate (GlcN-1-P) to produce N-acetylglucosamine-1-phosphate (GlcNAc-1-P), which is converted into UDP-GlcNAc by the transfer of uridine 5-monophosphate (from uridine 5-triphosphate), a reaction catalyzed by the N-terminal domain. This Paraburkholderia xenovorans (strain LB400) protein is Bifunctional protein GlmU.